The chain runs to 323 residues: Melanocortin receptor 3 (323 aa).

Residues 1–37 are Extracellular-facing; sequence MNSSCCPSSSYPTLPNLSQHPAAPSASNRSGSGFCEQ. 3 N-linked (GlcNAc...) asparagine glycosylation sites follow: Asn-2, Asn-16, and Asn-28. Residues 38–63 traverse the membrane as a helical segment; sequence VFIKPEVFLALGIVSLMENILVILAV. The Cytoplasmic portion of the chain corresponds to 64–75; the sequence is VRNGNLHSPMYF. A helical transmembrane segment spans residues 76 to 100; that stretch reads FLCSLAAADMLVSLSNSLETIMIVV. Residues 101–118 are Extracellular-facing; that stretch reads INSDSLTLEDQFIQHMDN. Residues 119–140 form a helical membrane-spanning segment; sequence IFDSMICISLVASICNLLAIAV. At 141–160 the chain is on the cytoplasmic side; the sequence is DRYVTIFYALRYHSIMTVRK. Residues 161 to 181 form a helical membrane-spanning segment; sequence ALSLIVAIWVCCGICGVMFIV. At 182–186 the chain is on the extracellular side; it reads YSESK. The helical transmembrane segment at 187–210 threads the bilayer; that stretch reads MVIVCLITMFFAMVLLMGTLYIHM. Topologically, residues 211–245 are cytoplasmic; that stretch reads FLFARLHVQRIAALPPADGVAPQQHSCMKGAVTIT. Residues 246–268 traverse the membrane as a helical segment; it reads ILLGVFIFCWAPFFLHLVLIITC. The Extracellular portion of the chain corresponds to 269-277; the sequence is PTNPYCICY. The helical transmembrane segment at 278 to 301 threads the bilayer; that stretch reads TAHFNTYLVLIMCNSVIDPLIYAF. Residues 302-323 are Cytoplasmic-facing; the sequence is RSLELRNTFKEILCGCNGMNVG. A lipid anchor (S-palmitoyl cysteine) is attached at Cys-315.

This sequence belongs to the G-protein coupled receptor 1 family. As to expression, brain.

The protein resides in the cell membrane. Functionally, receptor for MSH (alpha, beta and gamma) and ACTH. This receptor is mediated by G proteins which activate adenylate cyclase. Required for expression of anticipatory patterns of activity and wakefulness during periods of limited nutrient availability and for the normal regulation of circadian clock activity in the brain. The protein is Melanocortin receptor 3 (Mc3r) of Rattus norvegicus (Rat).